Consider the following 187-residue polypeptide: Elongation factor P (187 aa).

It belongs to the elongation factor P family.

The protein resides in the cytoplasm. It functions in the pathway protein biosynthesis; polypeptide chain elongation. Its function is as follows. Involved in peptide bond synthesis. Stimulates efficient translation and peptide-bond synthesis on native or reconstituted 70S ribosomes in vitro. Probably functions indirectly by altering the affinity of the ribosome for aminoacyl-tRNA, thus increasing their reactivity as acceptors for peptidyl transferase. In Rhizorhabdus wittichii (strain DSM 6014 / CCUG 31198 / JCM 15750 / NBRC 105917 / EY 4224 / RW1) (Sphingomonas wittichii), this protein is Elongation factor P.